We begin with the raw amino-acid sequence, 968 residues long: RNA polymerase-associated protein RapA (968 aa).

One can recognise a Helicase ATP-binding domain in the interval 164 to 334; the sequence is DVGRRHAPRV…FARLRLLDPN (171 aa). 177 to 184 is an ATP binding site; sequence DEVGLGKT. Positions 280-283 match the DEAH box motif; it reads DEAH. Residues 490-662 enclose the Helicase C-terminal domain; sequence RVEWLMGYLT…YLASPDETEG (173 aa).

Belongs to the SNF2/RAD54 helicase family. RapA subfamily. As to quaternary structure, interacts with the RNAP. Has a higher affinity for the core RNAP than for the holoenzyme. Its ATPase activity is stimulated by binding to RNAP.

In terms of biological role, transcription regulator that activates transcription by stimulating RNA polymerase (RNAP) recycling in case of stress conditions such as supercoiled DNA or high salt concentrations. Probably acts by releasing the RNAP, when it is trapped or immobilized on tightly supercoiled DNA. Does not activate transcription on linear DNA. Probably not involved in DNA repair. In Escherichia coli O127:H6 (strain E2348/69 / EPEC), this protein is RNA polymerase-associated protein RapA.